We begin with the raw amino-acid sequence, 159 residues long: Type-1 angiotensin II receptor-associated protein (159 aa).

Topologically, residues 1–23 (MELPAVNLKVILLGHWLLTTWGC) are extracellular. The chain crosses the membrane as a helical span at residues 24 to 44 (IVFSGSYAWANFTILALGVWA). At 45–55 (VAQRDSIDAIS) the chain is on the cytoplasmic side. The helical transmembrane segment at 56–76 (MFLGGLLATIFLDIVHISIFY) threads the bilayer. The Extracellular portion of the chain corresponds to 77 to 86 (PRVSLTDTGR). Residues 87–107 (FGVGMAILSLLLKPLSCCFVY) traverse the membrane as a helical segment. The Cytoplasmic portion of the chain corresponds to 108–159 (HMYRERGGELLVHTGFLGSSQDRSAYQTIDSAEAPADPFAVPEGRSQDARGY). Residues 110–122 (YRERGGELLVHTG) are interaction with AGTR1. Residues S126 and S127 each carry the phosphoserine modification. T135 is modified (phosphothreonine). A phosphoserine mark is found at S138 and S153. The segment at 140–159 (EAPADPFAVPEGRSQDARGY) is disordered.

In terms of assembly, interacts with RACK1, and with the C-terminal region of AGTR1. In terms of tissue distribution, ubiquitous but more abundant in kidney, heart, pancreas and thyroid.

Its subcellular location is the endoplasmic reticulum membrane. The protein resides in the golgi apparatus membrane. The protein localises to the cytoplasmic vesicle membrane. Its function is as follows. Appears to be a negative regulator of type-1 angiotensin II receptor-mediated signaling by regulating receptor internalization as well as mechanism of receptor desensitization such as phosphorylation. Also induces a decrease in cell proliferation and angiotensin II-stimulated transcriptional activity. This chain is Type-1 angiotensin II receptor-associated protein (AGTRAP), found in Homo sapiens (Human).